The primary structure comprises 58 residues: uncharacterized protein (58 aa).

Its subcellular location is the plastid. The protein resides in the chloroplast. This is an uncharacterized protein from Porphyra purpurea (Red seaweed).